Reading from the N-terminus, the 202-residue chain is Large ribosomal subunit protein bL25 (202 aa).

Belongs to the bacterial ribosomal protein bL25 family. CTC subfamily. Part of the 50S ribosomal subunit; part of the 5S rRNA/L5/L18/L25 subcomplex. Contacts the 5S rRNA. Binds to the 5S rRNA independently of L5 and L18.

Functionally, this is one of the proteins that binds to the 5S RNA in the ribosome where it forms part of the central protuberance. The chain is Large ribosomal subunit protein bL25 from Clostridium perfringens (strain ATCC 13124 / DSM 756 / JCM 1290 / NCIMB 6125 / NCTC 8237 / Type A).